Here is a 529-residue protein sequence, read N- to C-terminus: Phosphoenolpyruvate carboxykinase (ATP) (529 aa).

R52 is a binding site for substrate. Residues R130, N131, and F133 each coordinate Ca(2+). Residues Y191 and K197 each contribute to the substrate site. ATP contacts are provided by residues K197, H216, and 232 to 240 (GLSGTGKTT). Mn(2+) contacts are provided by K197 and H216. Mn(2+) is bound at residue D253. G267 contributes to the Ca(2+) binding site. Residues E281, R319, 438–439 (RF), F439, and T444 contribute to the ATP site. Position 319 (R319) interacts with substrate.

This sequence belongs to the phosphoenolpyruvate carboxykinase (ATP) family. In terms of assembly, dimer of dimers. The cofactor is Mn(2+).

Its subcellular location is the cytoplasm. It catalyses the reaction oxaloacetate + ATP = phosphoenolpyruvate + ADP + CO2. Its pathway is carbohydrate biosynthesis; gluconeogenesis. Its activity is regulated as follows. Allosterically activated by calcium. Its function is as follows. Involved in gluconeogenesis. Catalyzes the conversion of oxaloacetate (OAA) to phosphoenolpyruvate (PEP) through direct phosphoryl transfer between the nucleoside triphosphate and OAA. The chain is Phosphoenolpyruvate carboxykinase (ATP) from Thermus thermophilus (strain ATCC 27634 / DSM 579 / HB8).